Here is a 213-residue protein sequence, read N- to C-terminus: ATP-dependent dethiobiotin synthetase BioD (213 aa).

N12–F17 lines the ATP pocket. T16 serves as a coordination point for Mg(2+). Residue K36 is part of the active site. S40 is a substrate binding site. ATP is bound by residues D53, E110 to G113, and N170 to Q171. D53 and E110 together coordinate Mg(2+).

This sequence belongs to the dethiobiotin synthetase family. As to quaternary structure, homodimer. It depends on Mg(2+) as a cofactor.

Its subcellular location is the cytoplasm. The catalysed reaction is (7R,8S)-7,8-diammoniononanoate + CO2 + ATP = (4R,5S)-dethiobiotin + ADP + phosphate + 3 H(+). The protein operates within cofactor biosynthesis; biotin biosynthesis; biotin from 7,8-diaminononanoate: step 1/2. Catalyzes a mechanistically unusual reaction, the ATP-dependent insertion of CO2 between the N7 and N8 nitrogen atoms of 7,8-diaminopelargonic acid (DAPA, also called 7,8-diammoniononanoate) to form a ureido ring. This Ruthia magnifica subsp. Calyptogena magnifica protein is ATP-dependent dethiobiotin synthetase BioD.